Consider the following 525-residue polypeptide: MPKISTESVNTTIAPSQPASTAPKDTATLFNPAKPTATPAQSSIDSVQPYHHKANHNQNRSIAQSGDATSSATASSSVTAAPKIGFVSLGCPKALVDSERIITELSRDGYQVASDYDGADLVVVNTCGFIESAVQESLDAIGEAISKNGKVIVTGCLGKEADKIREMHPAVLAVTGAHAYDEVIRAVALHVPKPDRSLDASYDPKIDLINEAGIKLTPSHYAYLKISEGCNHRCTFCIIPSLRGDLVSRPIDSVMNEALALKKAGVKELLIISQDTSAYGLDLKYKTSFWNGMPLKSKFYDLCQALNDLGIWVRLHYVYPYPHVDKVVELMGEKKLLPYLDIPFQHASHRILKAMKRPAHSENTLARIHAWREICPDIVIRSTFVVGFPGETEEDFQCLLDWLVEARLDRVGAFTYSEVEGAVANDLPNHVPEDVKQERYERLMTLQQDISAQKLQEKIGKTLMVLVDEIDREEGVAICRSYADAPEIDGHVYVDDIDAHVKVGQFLTVTIDDASEYDLFASYQA.

Polar residues predominate over residues 1–20 (MPKISTESVNTTIAPSQPAS). Residues 1–44 (MPKISTESVNTTIAPSQPASTAPKDTATLFNPAKPTATPAQSSI) form a disordered region. Positions 82–192 (PKIGFVSLGC…VIRAVALHVP (111 aa)) constitute an MTTase N-terminal domain. C91, C127, C156, C230, C234, and C237 together coordinate [4Fe-4S] cluster. Residues 216–453 (LTPSHYAYLK…MTLQQDISAQ (238 aa)) enclose the Radical SAM core domain. One can recognise a TRAM domain in the interval 456–525 (QEKIGKTLMV…EYDLFASYQA (70 aa)).

The protein belongs to the methylthiotransferase family. RimO subfamily. [4Fe-4S] cluster serves as cofactor.

Its subcellular location is the cytoplasm. The catalysed reaction is L-aspartate(89)-[ribosomal protein uS12]-hydrogen + (sulfur carrier)-SH + AH2 + 2 S-adenosyl-L-methionine = 3-methylsulfanyl-L-aspartate(89)-[ribosomal protein uS12]-hydrogen + (sulfur carrier)-H + 5'-deoxyadenosine + L-methionine + A + S-adenosyl-L-homocysteine + 2 H(+). In terms of biological role, catalyzes the methylthiolation of an aspartic acid residue of ribosomal protein uS12. In Psychrobacter arcticus (strain DSM 17307 / VKM B-2377 / 273-4), this protein is Ribosomal protein uS12 methylthiotransferase RimO.